A 210-amino-acid polypeptide reads, in one-letter code: HTH-type transcriptional regulator MtrR (210 aa).

The HTH tetR-type domain occupies 9-69 (LKTKEHLMLA…ALFQRICDDI (61 aa)). The H-T-H motif DNA-binding region spans 32–51 (SLNEIAQAAGVTRGALYWHF).

As to quaternary structure, homodimer. Binds to DNA as a pair of dimers.

DNA binding is affected significantly by increasing the NaCl concentration. Its function is as follows. Controls the permeability of the cell envelope to hydrophobic compounds such as antibiotics and detergents. Represses transcription of the mtrCDE-encoded efflux pump by binding within the mtrCDE promoter. Also negatively regulates the expression of farR, by binding to its promoter region, leading indirectly to the positive regulation of expression of the farAB-encoded efflux pump. The protein is HTH-type transcriptional regulator MtrR of Neisseria gonorrhoeae.